We begin with the raw amino-acid sequence, 276 residues long: Undecaprenyl-diphosphatase (276 aa).

A run of 6 helical transmembrane segments spans residues 43 to 63 (RAMA…VWEF), 85 to 105 (LNLL…ADTI), 109 to 129 (LFNA…MLWA), 183 to 203 (AATE…AVYS), 218 to 238 (VFAI…RALL), and 254 to 274 (IAFG…WASA).

Belongs to the UppP family.

Its subcellular location is the cell inner membrane. It carries out the reaction di-trans,octa-cis-undecaprenyl diphosphate + H2O = di-trans,octa-cis-undecaprenyl phosphate + phosphate + H(+). Functionally, catalyzes the dephosphorylation of undecaprenyl diphosphate (UPP). Confers resistance to bacitracin. The sequence is that of Undecaprenyl-diphosphatase from Pseudomonas syringae pv. tomato (strain ATCC BAA-871 / DC3000).